We begin with the raw amino-acid sequence, 149 residues long: Calmodulin (149 aa).

Alanine 2 is modified (N-acetylalanine). 4 consecutive EF-hand domains span residues 8-43, 44-79, 81-116, and 117-149; these read EQIA…LGQN, PTEA…KMKD, DTEE…LGEK, and LTDE…MMAK. Ca(2+)-binding residues include aspartate 21, aspartate 23, aspartate 25, threonine 27, glutamate 32, aspartate 57, aspartate 59, asparagine 61, threonine 63, glutamate 68, aspartate 94, aspartate 96, asparagine 98, and glutamate 105. N6,N6,N6-trimethyllysine is present on lysine 116. Aspartate 130, aspartate 132, aspartate 134, glutamine 136, and glutamate 141 together coordinate Ca(2+).

Belongs to the calmodulin family.

Functionally, calmodulin mediates the control of a large number of enzymes, ion channels and other proteins by Ca(2+). Among the enzymes to be stimulated by the calmodulin-Ca(2+) complex are a number of protein kinases and phosphatases. This chain is Calmodulin, found in Karlodinium veneficum (Dinoflagellate).